Here is a 220-residue protein sequence, read N- to C-terminus: UPF0502 protein PSPPH_2577 (220 aa).

It belongs to the UPF0502 family.

The chain is UPF0502 protein PSPPH_2577 from Pseudomonas savastanoi pv. phaseolicola (strain 1448A / Race 6) (Pseudomonas syringae pv. phaseolicola (strain 1448A / Race 6)).